Consider the following 369-residue polypeptide: Putative agmatine deiminase (369 aa).

Cysteine 361 acts as the Amidino-cysteine intermediate in catalysis.

Belongs to the agmatine deiminase family.

The catalysed reaction is agmatine + H2O = N-carbamoylputrescine + NH4(+). The sequence is that of Putative agmatine deiminase from Streptococcus mutans serotype c (strain ATCC 700610 / UA159).